The primary structure comprises 91 residues: Large ribosomal subunit protein bL31B (91 aa).

The protein belongs to the bacterial ribosomal protein bL31 family. Type B subfamily. Part of the 50S ribosomal subunit.

This Neisseria gonorrhoeae (strain NCCP11945) protein is Large ribosomal subunit protein bL31B.